The following is a 104-amino-acid chain: Protein KleF (104 aa).

This is Protein KleF (kleF) from Escherichia coli.